Here is a 946-residue protein sequence, read N- to C-terminus: Bifunctional glutamine synthetase adenylyltransferase/adenylyl-removing enzyme (946 aa).

Positions 1–440 (MKPLSSPLQQ…VFNELIGDDE (440 aa)) are adenylyl removase. Positions 449–946 (SEQWRELWQD…ASWQKWLVEE (498 aa)) are adenylyl transferase.

This sequence belongs to the GlnE family. Mg(2+) is required as a cofactor.

The enzyme catalyses [glutamine synthetase]-O(4)-(5'-adenylyl)-L-tyrosine + phosphate = [glutamine synthetase]-L-tyrosine + ADP. It catalyses the reaction [glutamine synthetase]-L-tyrosine + ATP = [glutamine synthetase]-O(4)-(5'-adenylyl)-L-tyrosine + diphosphate. Functionally, involved in the regulation of glutamine synthetase GlnA, a key enzyme in the process to assimilate ammonia. When cellular nitrogen levels are high, the C-terminal adenylyl transferase (AT) inactivates GlnA by covalent transfer of an adenylyl group from ATP to specific tyrosine residue of GlnA, thus reducing its activity. Conversely, when nitrogen levels are low, the N-terminal adenylyl removase (AR) activates GlnA by removing the adenylyl group by phosphorolysis, increasing its activity. The regulatory region of GlnE binds the signal transduction protein PII (GlnB) which indicates the nitrogen status of the cell. The protein is Bifunctional glutamine synthetase adenylyltransferase/adenylyl-removing enzyme of Escherichia coli O6:H1 (strain CFT073 / ATCC 700928 / UPEC).